A 174-amino-acid polypeptide reads, in one-letter code: Transcriptional repressor NrdR (174 aa).

A zinc finger spans residues 3–34 (CPFCQHNDTRVIDSRVSEDGTTIRRRRECEAC). Residues 49-139 (PTVVKSDGGR…VYRSFQDVAD (91 aa)) enclose the ATP-cone domain.

Belongs to the NrdR family. Requires Zn(2+) as cofactor.

In terms of biological role, negatively regulates transcription of bacterial ribonucleotide reductase nrd genes and operons by binding to NrdR-boxes. The sequence is that of Transcriptional repressor NrdR from Xanthomonas campestris pv. campestris (strain 8004).